A 723-amino-acid polypeptide reads, in one-letter code: Polyribonucleotide nucleotidyltransferase (723 aa).

Positions 497 and 503 each coordinate Mg(2+). The 60-residue stretch at 564 to 623 (PRLLSFRIDPELIGTVIGPGGRTIKGITERTNTKIDIEDGGIVTIASHDGAAAEAAQRII) folds into the KH domain. In terms of domain architecture, S1 motif spans 633–701 (GEVFTGTITR…NRGRINLTLR (69 aa)). The interval 701–723 (RGVPQNGEETQSEPAPTPVAPLN) is disordered.

Belongs to the polyribonucleotide nucleotidyltransferase family. It depends on Mg(2+) as a cofactor.

The protein localises to the cytoplasm. The catalysed reaction is RNA(n+1) + phosphate = RNA(n) + a ribonucleoside 5'-diphosphate. Involved in mRNA degradation. Catalyzes the phosphorolysis of single-stranded polyribonucleotides processively in the 3'- to 5'-direction. This Prochlorococcus marinus (strain MIT 9313) protein is Polyribonucleotide nucleotidyltransferase.